The primary structure comprises 754 residues: Peptidyl-prolyl cis-trans isomerase G (754 aa).

Residues 11–176 (FFDIAINNQP…AEVRILSCGE (166 aa)) form the PPIase cyclophilin-type domain. A compositionally biased stretch (basic residues) spans 182 to 193 (KVKKEEKKRHKS). Positions 182-754 (KVKKEEKKRH…SPGTDEDKSG (573 aa)) are disordered. Positions 194–216 (SSSSSSSSSDSDSSSDSQSSSDS) are enriched in low complexity. Residues 228–253 (KKRKKKHRKNSRKHKKEKKKRKKSKK) show a composition bias toward basic residues. Phosphoserine occurs at positions 254, 256, 257, 259, and 290. Basic and acidic residues predominate over residues 292–310 (PKADEKERKNREREREREC). S315 bears the Phosphoserine mark. The segment covering 329-347 (SGRKIKGRGPRRYRTPSRS) has biased composition (basic residues). Basic and acidic residues-rich tracts occupy residues 348–368 (RSRDRFRRSETPPHWRQEMQR) and 379–449 (RWIK…DKYK). Phosphoserine is present on S356. T358 is modified (phosphothreonine). A Phosphoserine modification is found at S386. K392 participates in a covalent cross-link: Glycyl lysine isopeptide (Lys-Gly) (interchain with G-Cter in SUMO2). S397, S413, and S415 each carry phosphoserine. Residues 450–462 (NKVKKRAKSKSRS) are compositionally biased toward basic residues. 2 stretches are compositionally biased toward basic and acidic residues: residues 463–553 (KSKE…DITK) and 578–599 (RTHDRDRSRSKEYHRYREQEYR). Residues 616–627 (SRSKDRRRRRRD) are compositionally biased toward basic residues. A compositionally biased stretch (basic and acidic residues) spans 628–686 (SRSSEREESQSRNKDKYRNQESKSSHRKENSESEKRMYSKSRDHNSSNNSREKKADRDQ). A phosphoserine mark is found at S687 and S690. The segment covering 687–698 (SPFSKIKQSSQD) has biased composition (polar residues). K693 is covalently cross-linked (Glycyl lysine isopeptide (Lys-Gly) (interchain with G-Cter in SUMO2)). Phosphoserine occurs at positions 696, 744, and 745. The span at 707–754 (KNKEDEKIRSSVEKENQKSKGQENDHVHEKNKKFDHESSPGTDEDKSG) shows a compositional bias: basic and acidic residues. T748 is subject to Phosphothreonine. Residue S753 is modified to Phosphoserine.

As to quaternary structure, interacts with CLK1, PNN and with the phosphorylated C-terminal domain of RNA polymerase II. In terms of tissue distribution, ubiquitous.

The protein resides in the nucleus matrix. Its subcellular location is the nucleus speckle. The catalysed reaction is [protein]-peptidylproline (omega=180) = [protein]-peptidylproline (omega=0). With respect to regulation, inhibited by cyclosporin A (CsA). PPIase that catalyzes the cis-trans isomerization of proline imidic peptide bonds in oligopeptides and may therefore assist protein folding. May be implicated in the folding, transport, and assembly of proteins. May play an important role in the regulation of pre-mRNA splicing. The chain is Peptidyl-prolyl cis-trans isomerase G (PPIG) from Homo sapiens (Human).